Here is a 120-residue protein sequence, read N- to C-terminus: Non-specific lipid-transfer protein 2 (120 aa).

Positions 1 to 25 (MATSMKLACVALVMCMVVIAPMAEA) are cleaved as a signal peptide. Cystine bridges form between Cys29-Cys78, Cys39-Cys55, Cys56-Cys101, and Cys76-Cys115.

This sequence belongs to the plant LTP family. As to expression, expressed in roots, stem, leaves and tendrils of the mature plant.

Its function is as follows. Plant non-specific lipid-transfer proteins transfer phospholipids as well as galactolipids across membranes. May play a role in wax or cutin deposition in the cell walls of expanding epidermal cells and certain secretory tissues. This is Non-specific lipid-transfer protein 2 from Pisum sativum (Garden pea).